The following is a 1410-amino-acid chain: Non-secreted LysM effector LysM15 (1410 aa).

LysM domains follow at residues threonine 1179–methionine 1225 and threonine 1231–glycine 1277. The segment covering threonine 1291–glycine 1303 has biased composition (low complexity). The tract at residues threonine 1291 to threonine 1317 is disordered. Positions arginine 1328–valine 1375 constitute a LysM 3 domain.

This sequence belongs to the secreted LysM effector family.

Its function is as follows. Non-secreted LysM effector that might be involved in manipulation of host defenses for successful infection. In Penicillium expansum (Blue mold rot fungus), this protein is Non-secreted LysM effector LysM15.